The following is a 2849-amino-acid chain: Immunoglobulin-like and fibronectin type III domain-containing protein 1 (2849 aa).

The segment at 82–108 (AGSAARPDGSGSESLAASSSWKPRRRL) is disordered. Positions 90–101 (GSGSESLAASSS) are enriched in low complexity. The Ig-like 1 domain occupies 187 to 277 (PDFKQKPVTL…GEATCSVRLT (91 aa)). Positions 347–380 (IVDFRGMLRKLQEMKKEQEDRMAQYVSAIANLRH) form a coiled coil. One can recognise an Ig-like 2 domain in the interval 468–557 (PRVVVPLAET…SSAWLVVEGG (90 aa)). Disordered regions lie at residues 577–600 (LASEAEDAGGISIKGGQSRERGSL), 652–760 (VTLP…AGQR), 864–924 (YPGQ…DLRS), 962–981 (VGQREAGKPGGAEYEDIGPQ), 1061–1103 (EEEF…EGMA), 1221–1258 (TVGSVGGHGRKDSGTAGKVGEGYTEAEPGHSGGLSSWG), 1312–1338 (STVGTGNWDKARHPGAPSPHEAGSEGH), 1350–1384 (RDGSGIPEPWSAGDKTAYGEESKGLGPERTGPDGE), 1498–1523 (ETGRMESKNGVGYRGSSVGPGEMGSE), 1654–1675 (EWKDDSGFQGSLRDRGTPSEEI), 1724–1780 (QQGV…ATSH), and 1827–2055 (GAAG…SMDH). Residues 717–742 (HPRDRRLESRGEGQEHSEGHGSELDR) show a composition bias toward basic and acidic residues. Over residues 866-880 (GQTSEGNDTQKSSLS) the composition is skewed to polar residues. A compositionally biased stretch (gly residues) spans 1070-1084 (RSQGKGSRGGMGLGG). The span at 1873–1882 (SKPQEPQNEL) shows a compositional bias: polar residues. Composition is skewed to basic and acidic residues over residues 1988-2004 (SEDRGSLREPWSEDRRQ) and 2012-2021 (SRRDTQEGRS). In terms of domain architecture, Ig-like 3 spans 2034–2137 (PRSRYQPGTG…GCQHSEASLT (104 aa)). 3 Fibronectin type-III domains span residues 2244 to 2339 (PPQG…VAPE), 2344 to 2443 (PPSA…MRPP), and 2445 to 2540 (PVRD…AMPA). The 85-residue stretch at 2544–2628 (PRFLMDSGTK…LRNLQGKEAT (85 aa)) folds into the Ig-like 4 domain. The Fibronectin type-III 4 domain occupies 2641–2735 (APGSIYLQEN…TSQPWCIPRQ (95 aa)). The Ig-like 5 domain maps to 2749–2845 (PDLSQKPRFL…AVSTATLIVT (97 aa)).

Interacts with FLNC. Interacts with KY. As to expression, isoform 1, isoform 3 and isoform 4 are expressed in skeletal muscle while isoform 2 is detected in both skeletal muscle and heart (at protein level).

The protein resides in the nucleus. It localises to the cytoplasm. Its subcellular location is the myofibril. The protein localises to the sarcomere. It is found in the z line. This is Immunoglobulin-like and fibronectin type III domain-containing protein 1 (Igfn1) from Mus musculus (Mouse).